We begin with the raw amino-acid sequence, 644 residues long: 1-deoxy-D-xylulose-5-phosphate synthase (644 aa).

Residues H72 and G113–A115 contribute to the thiamine diphosphate site. D144 is a binding site for Mg(2+). Thiamine diphosphate contacts are provided by residues G145–A146, N174, Y287, and E370. Residue N174 participates in Mg(2+) binding.

Belongs to the transketolase family. DXPS subfamily. Homodimer. Mg(2+) serves as cofactor. Requires thiamine diphosphate as cofactor.

It carries out the reaction D-glyceraldehyde 3-phosphate + pyruvate + H(+) = 1-deoxy-D-xylulose 5-phosphate + CO2. The protein operates within metabolic intermediate biosynthesis; 1-deoxy-D-xylulose 5-phosphate biosynthesis; 1-deoxy-D-xylulose 5-phosphate from D-glyceraldehyde 3-phosphate and pyruvate: step 1/1. Functionally, catalyzes the acyloin condensation reaction between C atoms 2 and 3 of pyruvate and glyceraldehyde 3-phosphate to yield 1-deoxy-D-xylulose-5-phosphate (DXP). This Prochlorococcus marinus (strain MIT 9313) protein is 1-deoxy-D-xylulose-5-phosphate synthase.